The following is a 208-amino-acid chain: ATP synthase subunit b 1 (208 aa).

A compositionally biased stretch (polar residues) spans 1-18 (MFVSTAFAQTATESQPAS). The tract at residues 1–26 (MFVSTAFAQTATESQPASTAGEHGAA) is disordered. A helical membrane pass occupies residues 56 to 78 (SQVLWLAITFGLFYLFLSRVVLP).

Belongs to the ATPase B chain family. In terms of assembly, F-type ATPases have 2 components, F(1) - the catalytic core - and F(0) - the membrane proton channel. F(1) has five subunits: alpha(3), beta(3), gamma(1), delta(1), epsilon(1). F(0) has three main subunits: a(1), b(2) and c(10-14). The alpha and beta chains form an alternating ring which encloses part of the gamma chain. F(1) is attached to F(0) by a central stalk formed by the gamma and epsilon chains, while a peripheral stalk is formed by the delta and b chains.

Its subcellular location is the cell inner membrane. Functionally, f(1)F(0) ATP synthase produces ATP from ADP in the presence of a proton or sodium gradient. F-type ATPases consist of two structural domains, F(1) containing the extramembraneous catalytic core and F(0) containing the membrane proton channel, linked together by a central stalk and a peripheral stalk. During catalysis, ATP synthesis in the catalytic domain of F(1) is coupled via a rotary mechanism of the central stalk subunits to proton translocation. Component of the F(0) channel, it forms part of the peripheral stalk, linking F(1) to F(0). This chain is ATP synthase subunit b 1, found in Brucella abortus (strain 2308).